The following is a 290-amino-acid chain: uncharacterized protein (290 aa).

It localises to the cell membrane. The protein resides in the membrane raft. This is an uncharacterized protein from Bacillus subtilis (strain 168).